A 453-amino-acid polypeptide reads, in one-letter code: tRNA modification GTPase MnmE (453 aa).

(6S)-5-formyl-5,6,7,8-tetrahydrofolate-binding residues include arginine 22, glutamate 79, and lysine 119. The TrmE-type G domain maps to 215–376; sequence GMKVVIAGRP…LREHLKACMG (162 aa). Asparagine 225 contacts K(+). GTP-binding positions include 225 to 230, 244 to 250, 269 to 272, and 334 to 337; these read NAGKSS, TEIAGTT, DTAG, and NKAD. Serine 229 contacts Mg(2+). K(+)-binding residues include threonine 244, isoleucine 246, and threonine 249. Position 250 (threonine 250) interacts with Mg(2+). Lysine 453 contributes to the (6S)-5-formyl-5,6,7,8-tetrahydrofolate binding site.

Belongs to the TRAFAC class TrmE-Era-EngA-EngB-Septin-like GTPase superfamily. TrmE GTPase family. In terms of assembly, homodimer. Heterotetramer of two MnmE and two MnmG subunits. Requires K(+) as cofactor.

The protein localises to the cytoplasm. Exhibits a very high intrinsic GTPase hydrolysis rate. Involved in the addition of a carboxymethylaminomethyl (cmnm) group at the wobble position (U34) of certain tRNAs, forming tRNA-cmnm(5)s(2)U34. In Aeromonas salmonicida (strain A449), this protein is tRNA modification GTPase MnmE.